The chain runs to 77 residues: Epoxide hydrolase (77 aa).

Monomer.

It catalyses the reaction an epoxide + H2O = an ethanediol. Its function is as follows. This enzyme acts on aliphatic epoxides. Its substrates include epichlorohydrin, epibromohydrin, epoxyoctane and styrene epoxide. This is Epoxide hydrolase from Pseudomonas sp. (strain AD1).